The chain runs to 536 residues: 2-isopropylmalate synthase (536 aa).

Positions 8-269 constitute a Pyruvate carboxyltransferase domain; sequence IIIFDTTLRD…YYNPFLGRPV (262 aa). 4 residues coordinate Mn(2+): aspartate 17, histidine 208, histidine 210, and asparagine 244. The regulatory domain stretch occupies residues 408–536; sequence RLELVQVSCG…KEKAAVTSAS (129 aa).

This sequence belongs to the alpha-IPM synthase/homocitrate synthase family. LeuA type 1 subfamily. In terms of assembly, homodimer. It depends on Mn(2+) as a cofactor.

The protein localises to the cytoplasm. The catalysed reaction is 3-methyl-2-oxobutanoate + acetyl-CoA + H2O = (2S)-2-isopropylmalate + CoA + H(+). Its pathway is amino-acid biosynthesis; L-leucine biosynthesis; L-leucine from 3-methyl-2-oxobutanoate: step 1/4. Catalyzes the condensation of the acetyl group of acetyl-CoA with 3-methyl-2-oxobutanoate (2-ketoisovalerate) to form 3-carboxy-3-hydroxy-4-methylpentanoate (2-isopropylmalate). In Gloeothece citriformis (strain PCC 7424) (Cyanothece sp. (strain PCC 7424)), this protein is 2-isopropylmalate synthase.